A 287-amino-acid chain; its full sequence is Glucose import system permease protein GlcU (287 aa).

The next 7 membrane-spanning stretches (helical) occupy residues 14 to 34, 76 to 96, 113 to 133, 149 to 169, 194 to 214, 218 to 238, and 250 to 270; these read HYLA…AMLI, IIVI…AYFF, VLFS…LLPL, IIFA…SMFI, IVFP…IIQA, FFIP…IAVL, and DTFA…VFLG. The ABC transmembrane type-1 domain occupies 71-269; sequence LINSLIIVIP…IIPLAIFVFL (199 aa).

It belongs to the binding-protein-dependent transport system permease family. The complex is composed of two ATP-binding proteins (GlcV), two transmembrane proteins (GlcT and GlcU) and a solute-binding protein (GlcS).

The protein resides in the cell membrane. Part of the ABC transporter complex GlcSTUV involved in glucose uptake. Responsible for the translocation of the substrate across the membrane. The sequence is that of Glucose import system permease protein GlcU from Saccharolobus solfataricus (strain ATCC 35092 / DSM 1617 / JCM 11322 / P2) (Sulfolobus solfataricus).